The following is a 136-amino-acid chain: uncharacterized protein (136 aa).

Helical transmembrane passes span 36–56 and 63–83; these read FLLT…IYLI and FAFA…LFLS.

The protein resides in the cell membrane. This is an uncharacterized protein from Mycoplasma pneumoniae (strain ATCC 29342 / M129 / Subtype 1) (Mycoplasmoides pneumoniae).